Reading from the N-terminus, the 233-residue chain is Riboflavin kinase (233 aa).

An H-T-H motif-like region spans residues Met1–Thr104. The tract at residues Ile105–Leu233 is riboflavin kinase. Gly114–Arg119 contacts CDP. Positions 143 and 145 each coordinate Mg(2+). FMN contacts are provided by Thr200 and Glu208. A CDP-binding site is contributed by Val213–Arg216.

It belongs to the archaeal riboflavin kinase family. It depends on Mg(2+) as a cofactor.

The catalysed reaction is riboflavin + CTP = CDP + FMN + H(+). The protein operates within cofactor biosynthesis; FMN biosynthesis; FMN from riboflavin (CTP route): step 1/1. In terms of biological role, catalyzes the CTP-dependent phosphorylation of riboflavin (vitamin B2) to form flavin mononucleotide (FMN). The polypeptide is Riboflavin kinase (ribK) (Archaeoglobus fulgidus (strain ATCC 49558 / DSM 4304 / JCM 9628 / NBRC 100126 / VC-16)).